Reading from the N-terminus, the 94-residue chain is Late cornified envelope-like proline-rich protein 1 (94 aa).

2 disordered regions span residues 1–26 (MSSD…CEQK) and 47–94 (CPRE…PPPE). Over residues 53 to 94 (PAPPKCPPCPSPSPSSCPPKPCAKPCPPKCPSSCPPPCPPPE) the composition is skewed to pro residues.

The protein belongs to the cornifin (SPRR) family.

This Macaca fascicularis (Crab-eating macaque) protein is Late cornified envelope-like proline-rich protein 1 (LELP1).